A 1398-amino-acid polypeptide reads, in one-letter code: Disease resistance protein RPV1 (1398 aa).

Positions 22 to 185 (TTYDVFLSFR…EITNSIFRQL (164 aa)) constitute a TIR domain. NAD(+) contacts are provided by residues 31 to 36 (RGEDTR) and Gly-63. Glu-97 is an active-site residue. In terms of domain architecture, NB-ARC spans 201–440 (SHVKEMILRL…KRSYDGLDRI (240 aa)). 24 LRR repeats span residues 203 to 225 (VKEM…IYGV), 423 to 447 (KADI…IFLD), 478 to 504 (LNDL…GWEI), 535 to 560 (IKSV…VFAK), 610 to 632 (SYEL…NFDG), 633 to 657 (GKLV…DLER), 678 to 702 (MPNL…VGNM), 703 to 726 (KKLT…IGDL), 728 to 750 (SLES…GGNM), 751 to 773 (KSLT…IGDL), 775 to 797 (SLES…GGNM), 798 to 820 (KSLT…IGDL), 822 to 844 (SLEI…GGNM), 845 to 867 (KSLK…IGDL), 869 to 891 (SLKY…GGNM), 892 to 914 (KRLL…IGDL), 916 to 938 (SLKY…GGNM), 939 to 961 (KSLT…IGDL), 963 to 985 (SLEI…GGNM), 986 to 1008 (KSLK…IGDL), 1010 to 1032 (SLKY…GGNM), 1033 to 1055 (KSLL…IGDL), 1079 to 1102 (MKSL…IGDL), and 1105 to 1128 (LEML…AIDA). The segment covering 1315–1328 (QNSGDNGSALQDAN) has biased composition (polar residues). Positions 1315–1336 (QNSGDNGSALQDANGNVHGANQ) are disordered. The stretch at 1346–1369 (LDLLRNLSLGDNGSVVLEDTLGNR) is one LRR 25 repeat. The Nuclear localization signal signature appears at 1369–1373 (RKRRR).

Belongs to the disease resistance TIR-NB-LRR family. As to quaternary structure, homodimer; homodimerization is required for NAD(+) hydrolase (NADase) activity.

It is found in the nucleus. The protein localises to the cytoplasm. The catalysed reaction is NAD(+) + H2O = ADP-D-ribose + nicotinamide + H(+). Its function is as follows. Disease resistance (R) protein that confers resistance to multiple powdery and downy mildew by promoting cell death. Acts as a NAD(+) hydrolase (NADase): in response to activation, catalyzes cleavage of NAD(+) into ADP-D-ribose (ADPR) and nicotinamide; NAD(+) cleavage triggering a defense system that promotes cell death. This chain is Disease resistance protein RPV1, found in Vitis rotundifolia (Muscadine grape).